We begin with the raw amino-acid sequence, 528 residues long: Acid-sensing ion channel 1 (528 aa).

Residues 1 to 49 are Cytoplasmic-facing; that stretch reads MELKAEEEEVGGVQPVSIQAFASSSTLHGLAHIFSYERLSLKRALWALC. Residues 50–66 form a helical membrane-spanning segment; the sequence is FLGSLAVLLCVCTERVQ. The Extracellular portion of the chain corresponds to 67–427; the sequence is YYFHYHHVTK…ETIEQKKAYE (361 aa). Cystine bridges form between Cys-93-Cys-194, Cys-172-Cys-179, Cys-290-Cys-367, Cys-310-Cys-363, Cys-314-Cys-361, Cys-323-Cys-345, and Cys-325-Cys-337. 2 N-linked (GlcNAc...) asparagine glycosylation sites follow: Asn-368 and Asn-395. Residues 428 to 458 traverse the membrane as a discontinuously helical segment; sequence IAGLLGDIGGQMGLFIGASILTVLELFDYAY. A GAS motif; ion selectivity filter motif is present at residues 444-446; that stretch reads GAS. Over 459–528 the chain is Cytoplasmic; the sequence is EVIKHKLCRR…ARGTFEDFTC (70 aa). Ser-479 is modified (phosphoserine; by PKA). Ser-499 bears the Phosphoserine mark.

Belongs to the amiloride-sensitive sodium channel (TC 1.A.6) family. ASIC1 subfamily. Forms functional homotrimeric channels. Forms heterotrimers with other ASIC proteins, resulting in channels with distinct properties. Interacts with PICK1; regulates ASIC1 clustering in membranes. Interacts with STOM; alters heterotrimeric channels activity. PH-gating could be regulated by serine proteases. In terms of processing, phosphorylation by PKA regulates interaction with PICK1 and subcellular localization. Phosphorylation by PKC may regulate the channel. Expressed in neurons throughout the central and peripheral nervous system.

It localises to the cell membrane. The protein resides in the postsynaptic cell membrane. Its subcellular location is the cell projection. It is found in the dendrite. The enzyme catalyses Na(+)(in) = Na(+)(out). It carries out the reaction K(+)(in) = K(+)(out). It catalyses the reaction Li(+)(in) = Li(+)(out). The catalysed reaction is Ca(2+)(in) = Ca(2+)(out). Potentiated by FMRFamide-related neuropeptides, which are induced during inflammation and modulate pain responses. Inhibited by the diuretic drug amiloride. Spider venom psalmotoxin-1 inhibits the channel by locking it in its desensitized conformation. The homotrimeric channel is inhibited by the spider venom pi-theraphotoxin-Hm3a. Homotrimeric and heterotrimeric (with ASIC2 isoform 1) channels are inhibited by the snake venom mambalgin-1, which prevents proton-induced transitions from the resting closed state to the active and/or desensitized states. Inhibited by Texas coral snake toxin MitTx1. Forms voltage-independent, pH-gated trimeric sodium channels that act as postsynaptic excitatory receptors in the nervous system, playing a crucial role in regulating synaptic plasticity, learning, and memory. Upon extracellular pH drop this channel elicits transient, fast activating, and completely desensitizing inward currents. Displays high selectivity for sodium ions but can also permit the permeation of other cations. Regulates more or less directly intracellular calcium concentration and CaMKII phosphorylation, and thereby the density of dendritic spines. Modulates neuronal activity in the circuits underlying innate fear. In terms of biological role, has high selectivity for sodium ions, but can also be permeable to other cations including calcium, lithium and potassium. Functionally, produces acid activated currents with a reduced amplitude and inactivates faster. Has high selectivity for sodium ions but also supports a calcium-mediated current which is sustained and maintained as long as acidic conditions are present. Also potentially permeable to lithium and potassium. Its function is as follows. Has no measurable proton-gated sodium channel activity in vitro. In Homo sapiens (Human), this protein is Acid-sensing ion channel 1.